A 93-amino-acid chain; its full sequence is Small ribosomal subunit protein uS19 (93 aa).

It belongs to the universal ribosomal protein uS19 family.

In terms of biological role, protein S19 forms a complex with S13 that binds strongly to the 16S ribosomal RNA. The protein is Small ribosomal subunit protein uS19 of Leuconostoc citreum (strain KM20).